The primary structure comprises 440 residues: Probable exopolygalacturonase B (440 aa).

An N-terminal signal peptide occupies residues 1-20 (MRLHFLPLVALCATTASSLA). N-linked (GlcNAc...) asparagine glycosylation is found at Asn65, Asn190, and Asn230. Asp260 functions as the Proton donor in the catalytic mechanism. A disulfide bond links Cys262 and Cys279. Asn268 and Asn280 each carry an N-linked (GlcNAc...) asparagine glycan. His283 is a catalytic residue. Residues Asn307, Asn334, and Asn371 are each glycosylated (N-linked (GlcNAc...) asparagine). The cysteines at positions 397 and 403 are disulfide-linked. N-linked (GlcNAc...) asparagine glycosylation occurs at Asn412.

This sequence belongs to the glycosyl hydrolase 28 family.

The protein localises to the secreted. The enzyme catalyses [(1-&gt;4)-alpha-D-galacturonosyl](n) + H2O = alpha-D-galacturonate + [(1-&gt;4)-alpha-D-galacturonosyl](n-1). Specific in hydrolyzing the terminal glycosidic bond of polygalacturonic acid and oligogalacturonates. The chain is Probable exopolygalacturonase B (pgxB) from Emericella nidulans (strain FGSC A4 / ATCC 38163 / CBS 112.46 / NRRL 194 / M139) (Aspergillus nidulans).